A 452-amino-acid chain; its full sequence is Pup--protein ligase (452 aa).

E9 is a Mg(2+) binding site. R53 is a binding site for ATP. Residue Y55 coordinates Mg(2+). D57 (proton acceptor) is an active-site residue. Mg(2+) is bound at residue E63. T66 and W419 together coordinate ATP.

This sequence belongs to the Pup ligase/Pup deamidase family. Pup-conjugating enzyme subfamily.

It catalyses the reaction ATP + [prokaryotic ubiquitin-like protein]-L-glutamate + [protein]-L-lysine = ADP + phosphate + N(6)-([prokaryotic ubiquitin-like protein]-gamma-L-glutamyl)-[protein]-L-lysine.. It participates in protein degradation; proteasomal Pup-dependent pathway. Its pathway is protein modification; protein pupylation. Its function is as follows. Catalyzes the covalent attachment of the prokaryotic ubiquitin-like protein modifier Pup to the proteasomal substrate proteins, thereby targeting them for proteasomal degradation. This tagging system is termed pupylation. The ligation reaction involves the side-chain carboxylate of the C-terminal glutamate of Pup and the side-chain amino group of a substrate lysine. The chain is Pup--protein ligase from Frankia alni (strain DSM 45986 / CECT 9034 / ACN14a).